The primary structure comprises 273 residues: Large ribosomal subunit protein uL2 (273 aa).

The segment at 213–261 (WLGKRPQSRGVAMNPVDHPHGGGEGKSSGGRHPVTPWGVPTKGYKTRVN) is disordered.

It belongs to the universal ribosomal protein uL2 family. Part of the 50S ribosomal subunit. Forms a bridge to the 30S subunit in the 70S ribosome.

Functionally, one of the primary rRNA binding proteins. Required for association of the 30S and 50S subunits to form the 70S ribosome, for tRNA binding and peptide bond formation. It has been suggested to have peptidyltransferase activity; this is somewhat controversial. Makes several contacts with the 16S rRNA in the 70S ribosome. This Syntrophotalea carbinolica (strain DSM 2380 / NBRC 103641 / GraBd1) (Pelobacter carbinolicus) protein is Large ribosomal subunit protein uL2.